Reading from the N-terminus, the 1405-residue chain is Sterol 3-beta-glucosyltransferase (1405 aa).

2 stretches are compositionally biased toward basic and acidic residues: residues 1 to 16 and 95 to 105; these read MRPF…DRKL and TGQRPRKESSV. Disordered stretches follow at residues 1-27, 83-186, and 203-230; these read MRPF…SASR, ARFD…SATP, and DLKA…ASVS. The span at 106 to 115 shows a compositional bias: polar residues; that stretch reads RKGTSVSVNT. The span at 116–126 shows a compositional bias: low complexity; sequence SSLDPSQRSSS. The span at 206–218 shows a compositional bias: polar residues; the sequence is ASSTERSQSSLNE. One can recognise a GRAM 1 domain in the interval 246 to 285; it reads EKVLVEYACSLLQSMLLQGYMYVTEGHICFYAYLPKKSTV. One can recognise a PH domain in the interval 285–384; the sequence is VAIKSGYLHK…WVKALQKVIF (100 aa). Disordered stretches follow at residues 461–526 and 566–642; these read SQHL…DSSD and TIYG…SGAP. The span at 483-493 shows a compositional bias: polar residues; that stretch reads RWSLTSGTSRA. The segment covering 570–589 has biased composition (basic and acidic residues); it reads LDRRPSGRERRGRRNSDETA. Polar residues predominate over residues 590–603; sequence RSPSTRVNVGTGQQ. Over residues 606-624 the composition is skewed to basic and acidic residues; sequence ELDRRTDGNTSGREARDTT. Over residues 626-642 the composition is skewed to polar residues; sequence ESDQYTQDPTKSFSGAP. The region spanning 724-790 is the GRAM 2 domain; the sequence is DRFRAHFALP…RDIENVEKEK (67 aa). UDP-alpha-D-glucose-binding residues include serine 911, arginine 912, aspartate 914, alanine 1214, histidine 1216, histidine 1229, glycine 1233, threonine 1234, aspartate 1253, and glutamine 1254. The disordered stretch occupies residues 1330 to 1367; that stretch reads SIASSTPFSPTPSAKTAAEQDADDDVEDSEEWTFVGDD. Residues 1332-1348 show a composition bias toward low complexity; it reads ASSTPFSPTPSAKTAAE. Residues 1349-1367 show a composition bias toward acidic residues; the sequence is QDADDDVEDSEEWTFVGDD.

It belongs to the glycosyltransferase 28 family.

It localises to the cytoplasm. It is found in the preautophagosomal structure membrane. The enzyme catalyses a sterol + UDP-alpha-D-glucose = a sterol 3-beta-D-glucoside + UDP + H(+). It carries out the reaction ergosterol + UDP-alpha-D-glucose = ergosteryl 3-beta-D-glucoside + UDP + H(+). Sterol glycosyltransferase responsible for the glycosylation of ergosterol to form ergosterol-glucoside. In Aspergillus fumigatus (strain ATCC MYA-4609 / CBS 101355 / FGSC A1100 / Af293) (Neosartorya fumigata), this protein is Sterol 3-beta-glucosyltransferase.